A 364-amino-acid polypeptide reads, in one-letter code: sn-glycerol-3-phosphate import ATP-binding protein UgpC (364 aa).

The ABC transporter domain occupies 4–235 (VVLRNVRKTY…PATTFVASFI (232 aa)). 37–44 (GPSGCGKS) contributes to the ATP binding site.

This sequence belongs to the ABC transporter superfamily. sn-glycerol-3-phosphate importer (TC 3.A.1.1.3) family. The complex is composed of two ATP-binding proteins (UgpC), two transmembrane proteins (UgpA and UgpE) and a solute-binding protein (UgpB).

The protein resides in the cell inner membrane. It catalyses the reaction sn-glycerol 3-phosphate(out) + ATP + H2O = sn-glycerol 3-phosphate(in) + ADP + phosphate + H(+). Part of the ABC transporter complex UgpBAEC involved in sn-glycerol-3-phosphate (G3P) import. Responsible for energy coupling to the transport system. In Rhodopseudomonas palustris (strain BisB5), this protein is sn-glycerol-3-phosphate import ATP-binding protein UgpC.